A 700-amino-acid chain; its full sequence is Mitosis inducer protein blt1 (700 aa).

2 stretches are compositionally biased toward polar residues: residues 1-11 (MSKSAFTSKSQ) and 43-53 (PRSTALPNLSN). Disordered stretches follow at residues 1–53 (MSKS…NLSN) and 266–293 (TNNRKPVGSDGSNSNFNGGEEQMDSKDQ). Residues 273–284 (GSDGSNSNFNGG) are compositionally biased toward low complexity. Residues 496-575 (SVALDDHNRQ…LNMLQKLSMQ (80 aa)) are a coiled coil. Disordered regions lie at residues 634 to 659 (FSSFSGSSSKLPVRPSTALTDKRKPS) and 671 to 700 (SSGSPEKKHVITSSDAGHQRSKSRSFSSKM). At Ser636 the chain carries Phosphoserine.

In terms of assembly, interacts with cdr2, mid1 and sad1.

Its subcellular location is the cytoplasm. It is found in the cytoskeleton. Functionally, at the onset of mitosis, forms a medial ring structure before the arrangement of the medial actin ring. Essential for the central positioning of the division septum before the cell divides. The chain is Mitosis inducer protein blt1 (blt1) from Schizosaccharomyces pombe (strain 972 / ATCC 24843) (Fission yeast).